The sequence spans 697 residues: Elongation factor G (697 aa).

The region spanning 8 to 283 (ERCRNIGIMA…AVVDYLPSPL (276 aa)) is the tr-type G domain. GTP-binding positions include 17–24 (AHIDAGKT), 81–85 (DTPGH), and 135–138 (NKID).

The protein belongs to the TRAFAC class translation factor GTPase superfamily. Classic translation factor GTPase family. EF-G/EF-2 subfamily.

It is found in the cytoplasm. Functionally, catalyzes the GTP-dependent ribosomal translocation step during translation elongation. During this step, the ribosome changes from the pre-translocational (PRE) to the post-translocational (POST) state as the newly formed A-site-bound peptidyl-tRNA and P-site-bound deacylated tRNA move to the P and E sites, respectively. Catalyzes the coordinated movement of the two tRNA molecules, the mRNA and conformational changes in the ribosome. The chain is Elongation factor G from Koribacter versatilis (strain Ellin345).